The primary structure comprises 614 residues: Pentatricopeptide repeat-containing protein At1g63080, mitochondrial (614 aa).

The N-terminal 7 residues, 1 to 7, are a transit peptide targeting the mitochondrion; it reads MSLAKRF. PPR repeat units lie at residues 64 to 98, 99 to 133, 134 to 168, 169 to 203, 204 to 238, 239 to 273, 274 to 308, 309 to 343, 344 to 378, 379 to 413, 414 to 448, 449 to 483, 484 to 518, 519 to 553, and 554 to 588; these read SIVEFSKLLSAIAKMKKFDLVISFGEKMEILGVSH, NLYTYNIMINCLCRRSQLSFALAILGKMMKLGYGP, SIVTLNSLLNGFCHGNRISEAVALVDQMVEMGYQP, DTVTFTTLVHGLFQHNKASEAVALVERMVVKGCQP, DLVTYGAVINGLCKRGEPDLALNLLNKMEKGKIEA, DVVIYSTVIDSLCKYRHVDDALNLFTEMDNKGIRP, DVFTYSSLISCLCNYGRWSDASRLLSDMLERKINP, NVVTFNSLIDAFAKEGKLIEAEKLFDEMIQRSIDP, NIVTYNSLINGFCMHDRLDEAQQIFTLMVSKDCLP, DVVTYNTLINGFCKAKKVVDGMELFRDMSRRGLVG, NTVTYTTLIHGFFQASDCDNAQMVFKQMVSDGVHP, NIMTYNTLLDGLCKNGKLEKAMVVFEYLQKSKMEP, DIYTYNIMSEGMCKAGKVEDGWDLFCSLSLKGVKP, DVIAYNTMISGFCKKGLKEEAYTLFIKMKEDGPLP, and DSGTYNTLIRAHLRDGDKAASAELIKEMRSCRFAG.

The protein belongs to the PPR family. P subfamily.

The protein resides in the mitochondrion. The sequence is that of Pentatricopeptide repeat-containing protein At1g63080, mitochondrial from Arabidopsis thaliana (Mouse-ear cress).